Reading from the N-terminus, the 192-residue chain is Thymidine kinase (192 aa).

Residues 9–16 and 85–88 contribute to the ATP site; these read GAMNSGKT and DEAQ. Glu86 serves as the catalytic Proton acceptor. Positions 143, 146, 180, and 183 each coordinate Zn(2+).

The protein belongs to the thymidine kinase family. As to quaternary structure, homotetramer.

The protein resides in the cytoplasm. It carries out the reaction thymidine + ATP = dTMP + ADP + H(+). This chain is Thymidine kinase, found in Lactiplantibacillus plantarum (strain ATCC BAA-793 / NCIMB 8826 / WCFS1) (Lactobacillus plantarum).